Here is a 67-residue protein sequence, read N- to C-terminus: UPF0434 protein Reut_A0592 (67 aa).

Belongs to the UPF0434 family.

In Cupriavidus pinatubonensis (strain JMP 134 / LMG 1197) (Cupriavidus necator (strain JMP 134)), this protein is UPF0434 protein Reut_A0592.